The primary structure comprises 156 residues: Small ribosomal subunit protein uS7c (156 aa).

Belongs to the universal ribosomal protein uS7 family. Part of the 30S ribosomal subunit.

The protein resides in the plastid. It is found in the chloroplast. Functionally, one of the primary rRNA binding proteins, it binds directly to 16S rRNA where it nucleates assembly of the head domain of the 30S subunit. The polypeptide is Small ribosomal subunit protein uS7c (rps7) (Pyropia yezoensis (Susabi-nori)).